We begin with the raw amino-acid sequence, 203 residues long: uncharacterized protein (203 aa).

Residues 117 to 138 (SSDPKLKQPSNCLNDQTNNDSA) form a disordered region. Residues 124-138 (QPSNCLNDQTNNDSA) show a composition bias toward polar residues.

The protein localises to the cytoplasm. The protein resides in the nucleus. This is an uncharacterized protein from Schizosaccharomyces pombe (strain 972 / ATCC 24843) (Fission yeast).